We begin with the raw amino-acid sequence, 432 residues long: Cyclic di-GMP phosphodiesterase CdgJ (432 aa).

The EAL domain occupies 1–232; sequence MVRCLWAAEC…QRYVSPEHVI (232 aa). Positions 226 to 413 constitute an HDOD domain; sequence VSPEHVIAMQ…CLELGFDLED (188 aa).

It catalyses the reaction 3',3'-c-di-GMP + H2O = 5'-phosphoguanylyl(3'-&gt;5')guanosine + H(+). Functionally, phosphodiesterase (PDE) that catalyzes the hydrolysis of cyclic diguanylate (c-di-GMP). Positively regulates motility and negatively regulates biofilm formation. The polypeptide is Cyclic di-GMP phosphodiesterase CdgJ (Vibrio cholerae serotype O1 (strain ATCC 39315 / El Tor Inaba N16961)).